The chain runs to 326 residues: Protein TMED8 (326 aa).

A disordered region spans residues 1 to 99 (MSDRQAAEGP…EGQAPGEQAA (99 aa)). The span at 50–65 (SSPLASASDPAAESSP) shows a compositional bias: low complexity. Residues 160 to 324 (PPCVWTFAKV…NKTLYFHIYY (165 aa)) enclose the GOLD domain. Lysine 170 bears the N6-acetyllysine mark. Residues 234–268 (VQVSDSSEDEEEEEDEEEEIEEPVPVGDVERGSRS) are disordered. A compositionally biased stretch (acidic residues) spans 239–255 (SSEDEEEEEDEEEEIEE).

This chain is Protein TMED8 (Tmed8), found in Mus musculus (Mouse).